A 207-amino-acid polypeptide reads, in one-letter code: LexA repressor (207 aa).

Residues 28–48 constitute a DNA-binding region (H-T-H motif); it reads VREIGEAVGLASSSTVHGHLA. Residues serine 129 and lysine 167 each act as for autocatalytic cleavage activity in the active site.

Belongs to the peptidase S24 family. As to quaternary structure, homodimer.

It catalyses the reaction Hydrolysis of Ala-|-Gly bond in repressor LexA.. Represses a number of genes involved in the response to DNA damage (SOS response), including recA and lexA. In the presence of single-stranded DNA, RecA interacts with LexA causing an autocatalytic cleavage which disrupts the DNA-binding part of LexA, leading to derepression of the SOS regulon and eventually DNA repair. The protein is LexA repressor of Brevibacillus brevis (strain 47 / JCM 6285 / NBRC 100599).